Here is a 136-residue protein sequence, read N- to C-terminus: Small ribosomal subunit protein uS9 (136 aa).

The span at 103–116 (PLKTEGHLSRDPRA) shows a compositional bias: basic and acidic residues. Positions 103–136 (PLKTEGHLSRDPRAKERRKYGLKKARKAPQFSKR) are disordered. Basic residues predominate over residues 117 to 136 (KERRKYGLKKARKAPQFSKR).

It belongs to the universal ribosomal protein uS9 family.

This is Small ribosomal subunit protein uS9 (rpsI) from Prochlorococcus marinus (strain SARG / CCMP1375 / SS120).